The chain runs to 606 residues: uncharacterized protein (606 aa).

This is an uncharacterized protein from Sinorhizobium fredii (strain NBRC 101917 / NGR234).